The chain runs to 347 residues: Protein RecA (347 aa).

67–74 lines the ATP pocket; sequence GPESSGKT.

It belongs to the RecA family.

It is found in the cytoplasm. Its function is as follows. Can catalyze the hydrolysis of ATP in the presence of single-stranded DNA, the ATP-dependent uptake of single-stranded DNA by duplex DNA, and the ATP-dependent hybridization of homologous single-stranded DNAs. It interacts with LexA causing its activation and leading to its autocatalytic cleavage. The sequence is that of Protein RecA from Helicobacter pylori (strain Shi470).